The sequence spans 287 residues: Bifunctional protein FolD (287 aa).

Residues 165 to 167 (GRG), T190, and I231 contribute to the NADP(+) site.

Belongs to the tetrahydrofolate dehydrogenase/cyclohydrolase family. In terms of assembly, homodimer.

It catalyses the reaction (6R)-5,10-methylene-5,6,7,8-tetrahydrofolate + NADP(+) = (6R)-5,10-methenyltetrahydrofolate + NADPH. It carries out the reaction (6R)-5,10-methenyltetrahydrofolate + H2O = (6R)-10-formyltetrahydrofolate + H(+). It participates in one-carbon metabolism; tetrahydrofolate interconversion. Its function is as follows. Catalyzes the oxidation of 5,10-methylenetetrahydrofolate to 5,10-methenyltetrahydrofolate and then the hydrolysis of 5,10-methenyltetrahydrofolate to 10-formyltetrahydrofolate. The protein is Bifunctional protein FolD of Heliobacterium modesticaldum (strain ATCC 51547 / Ice1).